Reading from the N-terminus, the 669-residue chain is DNA ligase (669 aa).

Residues 34-38, 83-84, and E114 contribute to the NAD(+) site; these read DAEYD and SL. Catalysis depends on K116, which acts as the N6-AMP-lysine intermediate. Positions 137, 171, 287, and 311 each coordinate NAD(+). Positions 405, 408, 423, and 428 each coordinate Zn(2+). A BRCT domain is found at 591 to 669; that stretch reads NVESYFAGKT…EERFLQELNK (79 aa).

It belongs to the NAD-dependent DNA ligase family. LigA subfamily. The cofactor is Mg(2+). Mn(2+) is required as a cofactor.

It catalyses the reaction NAD(+) + (deoxyribonucleotide)n-3'-hydroxyl + 5'-phospho-(deoxyribonucleotide)m = (deoxyribonucleotide)n+m + AMP + beta-nicotinamide D-nucleotide.. In terms of biological role, DNA ligase that catalyzes the formation of phosphodiester linkages between 5'-phosphoryl and 3'-hydroxyl groups in double-stranded DNA using NAD as a coenzyme and as the energy source for the reaction. It is essential for DNA replication and repair of damaged DNA. This chain is DNA ligase, found in Bacillus cereus (strain AH187).